The primary structure comprises 263 residues: uncharacterized protein (263 aa).

Residues 12–247 form the ABC transporter domain; it reads LETQNLAIGY…ENLAKIYRTS (236 aa). 44 to 51 is a binding site for ATP; the sequence is GANGAGKS.

Belongs to the ABC transporter superfamily.

This is an uncharacterized protein from Haemophilus influenzae (strain ATCC 51907 / DSM 11121 / KW20 / Rd).